The sequence spans 251 residues: Aquaporin TIP1-1 (251 aa).

N-acetylmethionine is present on methionine 1. Over 1–23 (MPIRNIAIGRPDEATRPDALKAA) the chain is Cytoplasmic. Residues 24–44 (LAEFISTLIFVVAGSGSGMAF) form a helical membrane-spanning segment. The Vacuolar portion of the chain corresponds to 45-56 (NKLTENGATTPS). Residues 57 to 77 (GLVAAAVAHAFGLFVAVSVGA) traverse the membrane as a helical segment. At 78–103 (NISGGHVNPAVTFGAFIGGNITLLRG) the chain is on the cytoplasmic side. An NPA 1 motif is present at residues 85 to 87 (NPA). A helical membrane pass occupies residues 104–124 (ILYWIAQLLGSVVACLILKFA). At 125-143 (TGGLAVPAFGLSAGVGVLN) the chain is on the vacuolar side. The helical transmembrane segment at 144 to 164 (AFVFEIVMTFGLVYTVYATAI) threads the bilayer. Residues 165–172 (DPKNGSLG) are Cytoplasmic-facing. Residues 173–193 (TIAPIAIGFIVGANILAGGAF) traverse the membrane as a helical segment. Topologically, residues 194-218 (SGASMNPAVAFGPAVVSWTWTNHWV) are vacuolar. An NPA 2 motif is present at residues 199–201 (NPA). The helical transmembrane segment at 219–239 (YWAGPLVGGGIAGLIYEVFFI) threads the bilayer. Over 240 to 251 (NTTHEQLPTTDY) the chain is Cytoplasmic.

This sequence belongs to the MIP/aquaporin (TC 1.A.8) family. TIP (TC 1.A.8.10) subfamily. In terms of assembly, interacts with cucumber mosaic virus (CMV) Protein 1a. As to expression, in all the vegetative organs, but not in seeds. Preferentially expressed in roots.

The protein resides in the vacuole membrane. Functionally, water channel required to facilitate the transport of water, diffusion of amino acids and/or peptides from the vacuolar compartment to the cytoplasm. Does not promote glycerol permeability. May play a role in the control of cell turgor and cell expansion. Its function is impaired by Hg(2+). May be involved in a vesicle-based metabolite routing through or between pre-vacuolar compartments and the central vacuole. Transports urea in yeast cells in a pH-independent manner. Transports H(2)O(2) in yeast cells. The chain is Aquaporin TIP1-1 (TIP1-1) from Arabidopsis thaliana (Mouse-ear cress).